The sequence spans 178 residues: Large ribosomal subunit protein uL6 (178 aa).

The protein belongs to the universal ribosomal protein uL6 family. Part of the 50S ribosomal subunit.

This protein binds to the 23S rRNA, and is important in its secondary structure. It is located near the subunit interface in the base of the L7/L12 stalk, and near the tRNA binding site of the peptidyltransferase center. The protein is Large ribosomal subunit protein uL6 of Streptococcus pneumoniae serotype 4 (strain ATCC BAA-334 / TIGR4).